The primary structure comprises 261 residues: Proteasome subunit alpha type-4 (261 aa).

2 positions are modified to phosphoserine: Ser-13 and Ser-75. Position 127 is an N6-acetyllysine (Lys-127). Ser-173 carries the phosphoserine modification. An N6-acetyllysine modification is found at Lys-176. Positions His-240–Lys-261 are disordered.

Belongs to the peptidase T1A family. In terms of assembly, the 26S proteasome consists of a 20S proteasome core and two 19S regulatory subunits. The 20S proteasome core is a barrel-shaped complex made of 28 subunits that are arranged in four stacked rings. The two outer rings are each formed by seven alpha subunits, and the two inner rings are formed by seven beta subunits. The proteolytic activity is exerted by three beta-subunits PSMB5, PSMB6 and PSMB7. Ubiquitous.

It localises to the cytoplasm. The protein resides in the nucleus. Its function is as follows. Component of the 20S core proteasome complex involved in the proteolytic degradation of most intracellular proteins. This complex plays numerous essential roles within the cell by associating with different regulatory particles. Associated with two 19S regulatory particles, forms the 26S proteasome and thus participates in the ATP-dependent degradation of ubiquitinated proteins. The 26S proteasome plays a key role in the maintenance of protein homeostasis by removing misfolded or damaged proteins that could impair cellular functions, and by removing proteins whose functions are no longer required. Associated with the PA200 or PA28, the 20S proteasome mediates ubiquitin-independent protein degradation. This type of proteolysis is required in several pathways including spermatogenesis (20S-PA200 complex) or generation of a subset of MHC class I-presented antigenic peptides (20S-PA28 complex). This chain is Proteasome subunit alpha type-4 (Psma4), found in Rattus norvegicus (Rat).